The sequence spans 77 residues: Conotoxin Ar5.1 b (77 aa).

The N-terminal stretch at 1-19 is a signal peptide; it reads MLCLPVFIILLLLASPAAS. A propeptide spanning residues 20-44 is cleaved from the precursor; the sequence is NPLKTRIQSDLIRAALEDADMKNEK.

The protein belongs to the conotoxin T superfamily. Post-translationally, contains 2 disulfide bonds that can be either 'C1-C3, C2-C4' or 'C1-C4, C2-C3', since these disulfide connectivities have been observed for conotoxins with cysteine framework V (for examples, see AC P0DQQ7 and AC P81755). In terms of tissue distribution, expressed by the venom duct.

It is found in the secreted. In Conus arenatus (Sand-dusted cone), this protein is Conotoxin Ar5.1 b.